Here is a 429-residue protein sequence, read N- to C-terminus: Glucose-1-phosphate adenylyltransferase (429 aa).

Residues glycine 162, 177-178, and serine 209 each bind alpha-D-glucose 1-phosphate; that span reads EK.

The protein belongs to the bacterial/plant glucose-1-phosphate adenylyltransferase family. As to quaternary structure, homotetramer.

The enzyme catalyses alpha-D-glucose 1-phosphate + ATP + H(+) = ADP-alpha-D-glucose + diphosphate. Its pathway is glycan biosynthesis; glycogen biosynthesis. Involved in the biosynthesis of ADP-glucose, a building block required for the elongation reactions to produce glycogen. Catalyzes the reaction between ATP and alpha-D-glucose 1-phosphate (G1P) to produce pyrophosphate and ADP-Glc. This is Glucose-1-phosphate adenylyltransferase from Cyanothece sp. (strain PCC 7425 / ATCC 29141).